We begin with the raw amino-acid sequence, 570 residues long: Probable diguanylate cyclase DgcQ (570 aa).

2 helical membrane-spanning segments follow: residues 20 to 40 and 360 to 380; these read FGPG…STLL and IALT…WGVI. The GGDEF domain maps to 428–563; it reads QPFSVIQLDL…GRNRICASDA (136 aa). Residue D436 coordinates Mg(2+). N444, H449, and D453 together coordinate substrate. E479 is a binding site for Mg(2+). Catalysis depends on E479, which acts as the Proton acceptor.

Homodimer. Mg(2+) serves as cofactor.

The protein localises to the cell inner membrane. The enzyme catalyses 2 GTP = 3',3'-c-di-GMP + 2 diphosphate. It functions in the pathway glycan metabolism; bacterial cellulose biosynthesis. It participates in purine metabolism; 3',5'-cyclic di-GMP biosynthesis. Functionally, catalyzes the synthesis of cyclic-di-GMP (c-di-GMP) via the condensation of 2 GTP molecules. Cyclic-di-GMP is a second messenger which controls cell surface-associated traits in bacteria. Involved in the regulation of cellulose production. The polypeptide is Probable diguanylate cyclase DgcQ (Salmonella choleraesuis (strain SC-B67)).